Consider the following 504-residue polypeptide: Probable cytochrome P450 513E1 (504 aa).

The chain crosses the membrane as a helical span at residues 1 to 21; that stretch reads MNLYISILILIISLIIFFKNN. Cys450 contacts heme.

It belongs to the cytochrome P450 family. Heme is required as a cofactor.

The protein localises to the membrane. This is Probable cytochrome P450 513E1 (cyp513E1) from Dictyostelium discoideum (Social amoeba).